An 89-amino-acid polypeptide reads, in one-letter code: Small ribosomal subunit protein uS15 (89 aa).

Belongs to the universal ribosomal protein uS15 family. In terms of assembly, part of the 30S ribosomal subunit. Forms a bridge to the 50S subunit in the 70S ribosome, contacting the 23S rRNA.

Its function is as follows. One of the primary rRNA binding proteins, it binds directly to 16S rRNA where it helps nucleate assembly of the platform of the 30S subunit by binding and bridging several RNA helices of the 16S rRNA. In terms of biological role, forms an intersubunit bridge (bridge B4) with the 23S rRNA of the 50S subunit in the ribosome. The protein is Small ribosomal subunit protein uS15 of Chlamydia muridarum (strain MoPn / Nigg).